The sequence spans 539 residues: Phosphoenolpyruvate carboxykinase (ATP) (539 aa).

Residues R64, Y206, and K212 each contribute to the substrate site. ATP is bound by residues K212, H231, and 247-255 (GLSGTGKTT). 2 residues coordinate Mn(2+): K212 and H231. D268 is a Mn(2+) binding site. Residues E296, R332, 448–449 (RI), and T454 contribute to the ATP site. Substrate is bound at residue R332.

It belongs to the phosphoenolpyruvate carboxykinase (ATP) family. In terms of assembly, monomer. Requires Mn(2+) as cofactor.

Its subcellular location is the cytoplasm. The enzyme catalyses oxaloacetate + ATP = phosphoenolpyruvate + ADP + CO2. It participates in carbohydrate biosynthesis; gluconeogenesis. In terms of biological role, involved in the gluconeogenesis. Catalyzes the conversion of oxaloacetate (OAA) to phosphoenolpyruvate (PEP) through direct phosphoryl transfer between the nucleoside triphosphate and OAA. This is Phosphoenolpyruvate carboxykinase (ATP) from Salmonella choleraesuis (strain SC-B67).